The sequence spans 179 residues: Large ribosomal subunit protein uL6c (179 aa).

The protein belongs to the universal ribosomal protein uL6 family. Part of the 50S ribosomal subunit.

It is found in the plastid. It localises to the chloroplast. In terms of biological role, binds 23S rRNA. This Trieres chinensis (Marine centric diatom) protein is Large ribosomal subunit protein uL6c (rpl6).